Here is a 278-residue protein sequence, read N- to C-terminus: 4-hydroxy-tetrahydrodipicolinate reductase (278 aa).

NAD(+) contacts are provided by residues 16-21 (GAGGRM) and Glu42. Arg43 contributes to the NADP(+) binding site. NAD(+) contacts are provided by residues 106–108 (GTT) and 130–133 (AGNY). His163 serves as the catalytic Proton donor/acceptor. His164 contributes to the (S)-2,3,4,5-tetrahydrodipicolinate binding site. Catalysis depends on Lys167, which acts as the Proton donor. 173–174 (GT) lines the (S)-2,3,4,5-tetrahydrodipicolinate pocket.

This sequence belongs to the DapB family.

It is found in the cytoplasm. It catalyses the reaction (S)-2,3,4,5-tetrahydrodipicolinate + NAD(+) + H2O = (2S,4S)-4-hydroxy-2,3,4,5-tetrahydrodipicolinate + NADH + H(+). It carries out the reaction (S)-2,3,4,5-tetrahydrodipicolinate + NADP(+) + H2O = (2S,4S)-4-hydroxy-2,3,4,5-tetrahydrodipicolinate + NADPH + H(+). It functions in the pathway amino-acid biosynthesis; L-lysine biosynthesis via DAP pathway; (S)-tetrahydrodipicolinate from L-aspartate: step 4/4. Its function is as follows. Catalyzes the conversion of 4-hydroxy-tetrahydrodipicolinate (HTPA) to tetrahydrodipicolinate. The sequence is that of 4-hydroxy-tetrahydrodipicolinate reductase from Psychrobacter arcticus (strain DSM 17307 / VKM B-2377 / 273-4).